The following is a 285-amino-acid chain: Phosphatidylserine decarboxylase proenzyme (285 aa).

Residues D96, H152, and S250 each act as charge relay system; for autoendoproteolytic cleavage activity in the active site. The Schiff-base intermediate with substrate; via pyruvic acid; for decarboxylase activity role is filled by S250. At S250 the chain carries Pyruvic acid (Ser); by autocatalysis.

Belongs to the phosphatidylserine decarboxylase family. PSD-B subfamily. Prokaryotic type I sub-subfamily. Heterodimer of a large membrane-associated beta subunit and a small pyruvoyl-containing alpha subunit. It depends on pyruvate as a cofactor. In terms of processing, is synthesized initially as an inactive proenzyme. Formation of the active enzyme involves a self-maturation process in which the active site pyruvoyl group is generated from an internal serine residue via an autocatalytic post-translational modification. Two non-identical subunits are generated from the proenzyme in this reaction, and the pyruvate is formed at the N-terminus of the alpha chain, which is derived from the carboxyl end of the proenzyme. The autoendoproteolytic cleavage occurs by a canonical serine protease mechanism, in which the side chain hydroxyl group of the serine supplies its oxygen atom to form the C-terminus of the beta chain, while the remainder of the serine residue undergoes an oxidative deamination to produce ammonia and the pyruvoyl prosthetic group on the alpha chain. During this reaction, the Ser that is part of the protease active site of the proenzyme becomes the pyruvoyl prosthetic group, which constitutes an essential element of the active site of the mature decarboxylase.

The protein localises to the cell membrane. The enzyme catalyses a 1,2-diacyl-sn-glycero-3-phospho-L-serine + H(+) = a 1,2-diacyl-sn-glycero-3-phosphoethanolamine + CO2. It participates in phospholipid metabolism; phosphatidylethanolamine biosynthesis; phosphatidylethanolamine from CDP-diacylglycerol: step 2/2. Functionally, catalyzes the formation of phosphatidylethanolamine (PtdEtn) from phosphatidylserine (PtdSer). The polypeptide is Phosphatidylserine decarboxylase proenzyme (Acinetobacter baylyi (strain ATCC 33305 / BD413 / ADP1)).